Here is a 412-residue protein sequence, read N- to C-terminus: Propionate kinase (412 aa).

Belongs to the acetokinase family. PduW subfamily.

It localises to the cytoplasm. It catalyses the reaction propanoate + ATP = propanoyl phosphate + ADP. The protein operates within polyol metabolism; 1,2-propanediol degradation. Its function is as follows. Works with phosphate acetyltransferase (pta) to capture exogenous propionate and regenerate propionyl-CoA during degradation of 1,2-propanediol (1,2-PD). This Yersinia enterocolitica serotype O:8 / biotype 1B (strain NCTC 13174 / 8081) protein is Propionate kinase.